Here is a 277-residue protein sequence, read N- to C-terminus: Release factor glutamine methyltransferase (277 aa).

S-adenosyl-L-methionine is bound by residues 119 to 123, aspartate 142, and asparagine 184; that span reads GTGTG. 184–187 is a binding site for substrate; the sequence is NPPY.

This sequence belongs to the protein N5-glutamine methyltransferase family. PrmC subfamily.

The enzyme catalyses L-glutaminyl-[peptide chain release factor] + S-adenosyl-L-methionine = N(5)-methyl-L-glutaminyl-[peptide chain release factor] + S-adenosyl-L-homocysteine + H(+). Functionally, methylates the class 1 translation termination release factors RF1/PrfA and RF2/PrfB on the glutamine residue of the universally conserved GGQ motif. The sequence is that of Release factor glutamine methyltransferase from Enterococcus faecalis (strain ATCC 700802 / V583).